A 132-amino-acid chain; its full sequence is Binder of sperm protein homolog 1 (132 aa).

Positions 1–17 (MGSLMLLFVETTRNSSA) are cleaved as a signal peptide. Fibronectin type-II domains are found at residues 40–84 (VTDG…FCSA) and 85–132 (EDFA…KYCE). Cystine bridges form between Cys45–Cys69, Cys59–Cys82, Cys90–Cys116, and Cys104–Cys131. Asn53 carries an N-linked (GlcNAc...) asparagine glycan.

This sequence belongs to the seminal plasma protein family. As to expression, expressed only in the epididymis.

It is found in the secreted. Binds sperm in vitro and promotes sperm capacitation. Specifically promotes capacitation induced by high density lipoproteins (HDLs). Also binds heparin, phospholipid liposomes, and weakly to gelatin. Does not bind chondroitin sulfate B. The sequence is that of Binder of sperm protein homolog 1 (BSPH1) from Homo sapiens (Human).